The following is a 66-amino-acid chain: Putative ankyrin repeat protein RF_pd14 (66 aa).

An ANK repeat occupies 14–66 (KLNQKLMRAAATGDIEAVQKLVLRGADIYCRDHQGDTALSLAAGSGYLDILDI).

The chain is Putative ankyrin repeat protein RF_pd14 from Rickettsia felis (strain ATCC VR-1525 / URRWXCal2) (Rickettsia azadi).